The following is a 349-amino-acid chain: Draxin (349 aa).

The first 25 residues, 1-25 (MAGPAIHTAPMLFLVLLLPLELSLA), serve as a signal peptide directing secretion. Disordered regions lie at residues 38–79 (PENH…QDGA), 118–145 (PYPEKENRPPGWERTRKRSREHKRRRDR), and 244–273 (DGWPSAKKKEKHRGKLSSDGNETSPAEGEP). Residues 120–131 (PEKENRPPGWER) show a composition bias toward basic and acidic residues. 2 stretches are compositionally biased toward basic residues: residues 132-145 (TRKRSREHKRRRDR) and 249-258 (AKKKEKHRGK). Asparagine 264 is a glycosylation site (N-linked (GlcNAc...) asparagine).

This sequence belongs to the draxin family. In terms of assembly, interacts with LRP6.

The protein resides in the secreted. Chemorepulsive axon guidance protein required for the development of spinal cord and forebrain commissures. Acts as a chemorepulsive guidance protein for commissural axons during development. Able to inhibit or repel neurite outgrowth from dorsal spinal cord. Inhibits the stabilization of cytosolic beta-catenin (CTNNB1) via its interaction with LRP6, thereby acting as an antagonist of Wnt signaling pathway. The protein is Draxin of Homo sapiens (Human).